Here is a 745-residue protein sequence, read N- to C-terminus: Mitogen-activated protein kinase kinase kinase zak-1 (745 aa).

A Protein kinase domain is found at 31 to 305 (IQVGDHIGVG…KVMDECEKFM (275 aa)). ATP is bound by residues 37–45 (IGVGTFGAV) and Lys63. The active-site Proton acceptor is the Asp159. Positions 307–352 (LEDWKTEIEKQEKNVEKMRKDLEKRREQLEIREKALKQRMKVEQAV) form a coiled coil. In terms of domain architecture, SAM spans 366-438 (WSEHHTSHWV…MKMIRKLADT (73 aa)). The segment at 693–745 (LTRRRRTTTTNSEDTEKSDTNNKTPESQARRVHVHGGKDKWNWKKGKSRPKFT) is disordered. Basic residues predominate over residues 735–745 (WKKGKSRPKFT).

It belongs to the protein kinase superfamily. STE Ser/Thr protein kinase family. MAP kinase kinase kinase subfamily. The cofactor is Mg(2+). As to expression, widely expressed; expressed in most tissues, including intestines, muscle and the nervous system.

The protein localises to the cytoplasm. The protein resides in the nucleus. It catalyses the reaction L-seryl-[protein] + ATP = O-phospho-L-seryl-[protein] + ADP + H(+). The enzyme catalyses L-threonyl-[protein] + ATP = O-phospho-L-threonyl-[protein] + ADP + H(+). In terms of biological role, stress-activated component of a protein kinase signal transduction cascade that promotes programmed cell death in response to ribotoxic stress. Acts as the proximal sensor of ribotoxic stress: directly binds to the ribosome, thereby acting as a sentinel for colliding ribosomes. Upon ribosome collisions, activates the stress-activated protein kinase signal transduction cascade, leading to programmed cell death. Acts by catalyzing phosphorylation of MAP kinase kinases, leading to activation of the JNK and MAP kinase p38 pathways. This Caenorhabditis elegans protein is Mitogen-activated protein kinase kinase kinase zak-1.